The following is a 299-amino-acid chain: Cytosolic sulfotransferase 1 (299 aa).

51–56 (KAGTTW) is a binding site for 3'-phosphoadenylyl sulfate. His113 serves as the catalytic Proton acceptor. 3'-phosphoadenylyl sulfate is bound by residues Arg135, Ser143, Tyr199, 233–238 (VQFDAM), and 261–263 (RKG).

This sequence belongs to the sulfotransferase 1 family. As to expression, expressed in liver.

It is found in the cytoplasm. Its activity is regulated as follows. Inhibited by Co(2+), Zn(2+), Cd(2+) and Pb(2+) ions. Inactivated by Hg(2+) and Cu(2+) ions. In terms of biological role, sulfotransferase that utilizes 3'-phospho-5'-adenylyl sulfate (PAPS) as sulfonate donor to catalyze the sulfate conjugation of a variety of xenobiotic and endogenous compounds, including 2-naphthol, hydroxychlorobiphenyls, dopamine and T3 (triiodo-L-thyronine). This chain is Cytosolic sulfotransferase 1, found in Danio rerio (Zebrafish).